The primary structure comprises 308 residues: Ribosomal RNA small subunit methyltransferase H (308 aa).

S-adenosyl-L-methionine contacts are provided by residues 34 to 36 (GGH), Asp54, Phe80, Asp101, and Gln108.

The protein belongs to the methyltransferase superfamily. RsmH family.

The protein localises to the cytoplasm. The enzyme catalyses cytidine(1402) in 16S rRNA + S-adenosyl-L-methionine = N(4)-methylcytidine(1402) in 16S rRNA + S-adenosyl-L-homocysteine + H(+). In terms of biological role, specifically methylates the N4 position of cytidine in position 1402 (C1402) of 16S rRNA. The polypeptide is Ribosomal RNA small subunit methyltransferase H (Ureaplasma parvum serovar 3 (strain ATCC 27815 / 27 / NCTC 11736)).